A 1176-amino-acid polypeptide reads, in one-letter code: Leucine--tRNA ligase, cytoplasmic (1176 aa).

L-leucine contacts are provided by Tyr-52 and Tyr-54. Residues 60–63 carry the 'HIGH' region motif; that stretch reads HLGH. Ser-167 carries the phosphoserine modification. Residues 260–509 form an editing domain region; sequence GPQEYTLLKL…DAGDALIYME (250 aa). 2 residues coordinate L-leucine: Leu-594 and Ser-597. The 'KMSKS' region signature appears at 716 to 720; it reads KMSKS. Lys-719 lines the ATP pocket. A Phosphoserine modification is found at Ser-720. Residues Lys-970 and Lys-1047 each carry the N6-acetyllysine modification.

This sequence belongs to the class-I aminoacyl-tRNA synthetase family. Part of the aminoacyl-tRNA synthetase multienzyme complex, also known as multisynthetase complex (MSC), that is composed of the aminoacyl-tRNA ligases for Arg (RARS1), Asp (DARS1), Gln (QARS1), Ile (IARS1), Leu (LARS1), Lys (KARS1), Met (MARS1) the bifunctional ligase for Glu and Pro (EPRS1) and the auxiliary subunits AIMP1/p43, AIMP2/p38 and EEF1E1/p18.

The protein localises to the cytoplasm. It catalyses the reaction tRNA(Leu) + L-leucine + ATP = L-leucyl-tRNA(Leu) + AMP + diphosphate. It carries out the reaction L-methionyl-tRNA(Leu) + H2O = tRNA(Leu) + L-methionine + H(+). With respect to regulation, 5-fluoro-1,3-dihydro-1-hydroxy-1,2-benzoxaborole inhibits LARS1 by forming a covalent adduct with the 3' adenosine of tRNA(Leu) at the editing site, thus locking the enzyme in an inactive conformation. In terms of biological role, aminoacyl-tRNA synthetase that catalyzes the specific attachment of leucine to its cognate tRNA (tRNA(Leu)). It performs tRNA aminoacylation in a two-step reaction: Leu is initially activated by ATP to form a leucyl-adenylate (Leu-AMP) intermediate; then the leucyl moiety is transferred to the acceptor 3' end of the tRNA to yield leucyl-tRNA. To improve the fidelity of catalytic reactions, it is also able to hydrolyze misactivated aminoacyl-adenylate intermediates (pre-transfer editing) and mischarged aminoacyl-tRNAs (post-transfer editing). The polypeptide is Leucine--tRNA ligase, cytoplasmic (Homo sapiens (Human)).